The following is a 179-amino-acid chain: Gamma-crystallin S (179 aa).

N-acetylserine is present on S2. The tract at residues 2 to 5 (SKTG) is N-terminal arm. 2 consecutive Beta/gamma crystallin 'Greek key' domains span residues 6-44 (TKIT…RVEG) and 45-87 (GTWA…RALH). The interval 88-93 (LSSGGQ) is connecting peptide. 2 consecutive Beta/gamma crystallin 'Greek key' domains span residues 94–134 (YKIQ…KVLD) and 135–177 (GAWI…RRIV).

The protein belongs to the beta/gamma-crystallin family. As to quaternary structure, monomer.

Functionally, crystallins are the dominant structural components of the vertebrate eye lens. This Oryctolagus cuniculus (Rabbit) protein is Gamma-crystallin S (CRYGS).